Consider the following 239-residue polypeptide: Uridylate kinase (239 aa).

Residue 13–16 (KVSG) coordinates ATP. Gly55 contacts UMP. Residues Gly56 and Arg60 each coordinate ATP. Residues Asp75 and 136–143 (TGNPFFTT) contribute to the UMP site. ATP is bound by residues Thr163, Gln164, Tyr169, and Asp172.

It belongs to the UMP kinase family. Homohexamer.

The protein resides in the cytoplasm. The enzyme catalyses UMP + ATP = UDP + ADP. The protein operates within pyrimidine metabolism; CTP biosynthesis via de novo pathway; UDP from UMP (UMPK route): step 1/1. Inhibited by UTP. In terms of biological role, catalyzes the reversible phosphorylation of UMP to UDP. The protein is Uridylate kinase of Bartonella quintana (strain Toulouse) (Rochalimaea quintana).